The chain runs to 302 residues: Protein FdhE homolog (302 aa).

The protein belongs to the FdhE family.

The protein localises to the cytoplasm. Its function is as follows. Necessary for formate dehydrogenase activity. This Shewanella sp. (strain MR-4) protein is Protein FdhE homolog.